A 118-amino-acid polypeptide reads, in one-letter code: Cobalt transport protein CbiN (118 aa).

Transmembrane regions (helical) follow at residues 7 to 27 (INALLLLAVAALAVLPLVLGL) and 70 to 90 (SALFALQAALGAGVLAYYFGL). The disordered stretch occupies residues 99-118 (ERASAASGAAAAPGDAPEGD). The span at 102-118 (SAASGAAAAPGDAPEGD) shows a compositional bias: low complexity.

It belongs to the CbiN family. As to quaternary structure, forms an energy-coupling factor (ECF) transporter complex composed of an ATP-binding protein (A component, CbiO), a transmembrane protein (T component, CbiQ) and 2 possible substrate-capture proteins (S components, CbiM and CbiN) of unknown stoichimetry.

It localises to the cell membrane. The protein operates within cofactor biosynthesis; adenosylcobalamin biosynthesis. Functionally, part of the energy-coupling factor (ECF) transporter complex CbiMNOQ involved in cobalt import. This Streptomyces coelicolor (strain ATCC BAA-471 / A3(2) / M145) protein is Cobalt transport protein CbiN.